Reading from the N-terminus, the 113-residue chain is Ribonuclease P protein component (113 aa).

It belongs to the RnpA family. As to quaternary structure, consists of a catalytic RNA component (M1 or rnpB) and a protein subunit.

It carries out the reaction Endonucleolytic cleavage of RNA, removing 5'-extranucleotides from tRNA precursor.. In terms of biological role, RNaseP catalyzes the removal of the 5'-leader sequence from pre-tRNA to produce the mature 5'-terminus. It can also cleave other RNA substrates such as 4.5S RNA. The protein component plays an auxiliary but essential role in vivo by binding to the 5'-leader sequence and broadening the substrate specificity of the ribozyme. This is Ribonuclease P protein component from Finegoldia magna (strain ATCC 29328 / DSM 20472 / WAL 2508) (Peptostreptococcus magnus).